The chain runs to 2164 residues: Hemagglutinin A (2164 aa).

Positions 1–25 (MRKLNSLFSLAVLLSLLCWGQTAAA) are cleaved as a signal peptide. 3 peptidase C25-like regions span residues 26 to 539 (QGGP…TPPP), 540 to 991 (GGSS…TPPP), and 992 to 1443 (GGTS…TPPP). Disordered regions lie at residues 493–512 (WDAPNGTPNPNPGTTTLSES) and 520–541 (SWKTIDADGDGNNWTTTPPPGG). Low complexity predominate over residues 496–508 (PNGTPNPNPGTTT).

Belongs to the peptidase C25 family.

Its function is as follows. Agglutinates erythrocytes. This Porphyromonas gingivalis (strain ATCC BAA-308 / W83) protein is Hemagglutinin A (hagA).